The sequence spans 160 residues: Transcription elongation factor GreA (160 aa).

Residues 10-37 are a coiled coil; sequence TLDGKAKLENELQELKTVKRKEVVERIK.

Belongs to the GreA/GreB family.

Functionally, necessary for efficient RNA polymerase transcription elongation past template-encoded arresting sites. The arresting sites in DNA have the property of trapping a certain fraction of elongating RNA polymerases that pass through, resulting in locked ternary complexes. Cleavage of the nascent transcript by cleavage factors such as GreA or GreB allows the resumption of elongation from the new 3'terminus. GreA releases sequences of 2 to 3 nucleotides. In Listeria innocua serovar 6a (strain ATCC BAA-680 / CLIP 11262), this protein is Transcription elongation factor GreA.